The following is a 405-amino-acid chain: Phosphoglycerate kinase (405 aa).

Substrate contacts are provided by residues 21-23, arginine 38, 59-62, arginine 116, and arginine 156; these read DFN and HQSR. ATP-binding positions include glutamate 330 and 355–358; that span reads GGHT.

This sequence belongs to the phosphoglycerate kinase family. As to quaternary structure, monomer.

Its subcellular location is the cytoplasm. The catalysed reaction is (2R)-3-phosphoglycerate + ATP = (2R)-3-phospho-glyceroyl phosphate + ADP. It participates in carbohydrate degradation; glycolysis; pyruvate from D-glyceraldehyde 3-phosphate: step 2/5. The chain is Phosphoglycerate kinase from Methanocorpusculum labreanum (strain ATCC 43576 / DSM 4855 / Z).